The primary structure comprises 361 residues: Protein phosphatase 1 regulatory subunit 7 (361 aa).

Residues 1 to 64 are disordered; that stretch reads MAAERGAGQQ…RGAEDPEEEH (64 aa). Residue Ala-2 is modified to N-acetylalanine. A phosphoserine mark is found at Ser-12, Ser-24, Ser-27, Ser-45, and Ser-48. Residues 17–34 are compositionally biased toward basic and acidic residues; that stretch reads EVDRRVESEESGDEEGKK. The span at 48–58 shows a compositional bias: basic and acidic residues; sequence SLKDGVDRGAE. LRR repeat units lie at residues 78–99, 100–121, 122–143, 144–165, 166–187, 188–209, 210–231, 232–253, 254–275, 276–297, and 298–319; these read DAEDVDLTHYRIGKIEGLEVLK, KVKSLCLRQNLIKCIENLEELQ, SLRELDLYDNQIKKIENLEALT, ELEVLDISFNMLRNIEGIDKLT, QLKKLFLVNNKINKIENISNLH, QLQMLELGSNRIRAIENIDTLT, NLESLFLGKNKITKLQNLDALT, NLTVLSVQSNRLAKIEGLQSLV, NLRELYLSNNGIEVIEGLENNN, KLTMLDIASNRIKKIENISHLT, and ELQEFWMNDNLLESWSDLDELK. Ser-323 is subject to Phosphoserine. Residues 332–361 form the LRRCT domain; the sequence is NPLQKDPQYRRKVMLALPSVRQIDATYVRF.

The protein belongs to the SDS22 family. Interacts with PPP1CA, PPP1CB and PPP1CC/PPP1G. In terms of tissue distribution, widely expressed with high level in testis. Expression increases during puberty. Expressed in spermatids and probably also in spermatozoa.

It is found in the nucleus. Regulatory subunit of protein phosphatase 1. The polypeptide is Protein phosphatase 1 regulatory subunit 7 (Ppp1r7) (Mus musculus (Mouse)).